Reading from the N-terminus, the 178-residue chain is Cytochrome b6-f complex iron-sulfur subunit (178 aa).

Residues 20 to 42 (LLTFGTATGVALGALYPVANFFM) traverse the membrane as a helical segment. Residues 71–161 (NHPAGDRSLV…IDIDDDNVLV (91 aa)) enclose the Rieske domain. Residues Cys-107, His-109, Cys-125, and His-128 each contribute to the [2Fe-2S] cluster site. A disulfide bond links Cys-112 and Cys-127.

It belongs to the Rieske iron-sulfur protein family. As to quaternary structure, the 4 large subunits of the cytochrome b6-f complex are cytochrome b6, subunit IV (17 kDa polypeptide, PetD), cytochrome f and the Rieske protein, while the 4 small subunits are PetG, PetL, PetM and PetN. The complex functions as a dimer. [2Fe-2S] cluster is required as a cofactor.

It localises to the cellular thylakoid membrane. The enzyme catalyses 2 oxidized [plastocyanin] + a plastoquinol + 2 H(+)(in) = 2 reduced [plastocyanin] + a plastoquinone + 4 H(+)(out). Functionally, component of the cytochrome b6-f complex, which mediates electron transfer between photosystem II (PSII) and photosystem I (PSI), cyclic electron flow around PSI, and state transitions. This chain is Cytochrome b6-f complex iron-sulfur subunit, found in Prochlorococcus marinus (strain SARG / CCMP1375 / SS120).